A 187-amino-acid chain; its full sequence is Large ribosomal subunit protein uL13 (187 aa).

This sequence belongs to the universal ribosomal protein uL13 family. As to quaternary structure, part of the 50S ribosomal subunit.

Functionally, this protein is one of the early assembly proteins of the 50S ribosomal subunit, although it is not seen to bind rRNA by itself. It is important during the early stages of 50S assembly. This chain is Large ribosomal subunit protein uL13, found in Pyrobaculum aerophilum (strain ATCC 51768 / DSM 7523 / JCM 9630 / CIP 104966 / NBRC 100827 / IM2).